The following is a 425-amino-acid chain: Histone-binding protein RBBP4-B (425 aa).

Ala-2 is subject to N-acetylalanine. WD repeat units lie at residues 32–125, 126–175, 176–223, 225–270, 271–314, 315–371, and 372–404; these read YDLV…NHEG, EVNR…RLRG, HQKE…KTIF, GHTA…HSVD, AHTA…HSFE, SHKD…FIHG, and GHTAKISDFSWNPNEPWVICSVSEDNIMQVWQM.

This sequence belongs to the WD repeat RBAP46/RBAP48/MSI1 family. Binds directly to histone H4, probably via helix 1 of the histone fold, a region that is not accessible when histone H4 is in chromatin. Probably forms a large corepressor complex that contains ncor1, sin3a, hdac1-A and/or hdac1-B, hdac2, rbbp4-A and/or rbbp4-B and possibly rbbp7.

The protein resides in the nucleus. It localises to the chromosome. The protein localises to the telomere. Its function is as follows. Core histone-binding subunit that may target chromatin assembly factors, chromatin remodeling factors and histone deacetylases to their histone substrates in a manner that is regulated by nucleosomal DNA. Component of several complexes which regulate chromatin metabolism. The protein is Histone-binding protein RBBP4-B (rbbp4-b) of Xenopus laevis (African clawed frog).